The sequence spans 278 residues: Inosose isomerase (278 aa).

The a divalent metal cation site is built by Glu-142, Asp-174, His-200, and Glu-246.

The protein belongs to the IolI family. Requires a divalent metal cation as cofactor.

The enzyme catalyses scyllo-inosose = scyllo-inosine. Its pathway is polyol metabolism; myo-inositol degradation into acetyl-CoA. Involved in the reversible interconverion of 2-keto-myo-inositol (2KMI, inosose or 2,4,6/3,5-pentahydroxycyclohexanone) to 1-keto-D-chiro-inositol (1KDCI or 2,3,5/4,6-pentahydroxycyclohexanone). The protein is Inosose isomerase (iolI) of Bacillus licheniformis (strain ATCC 14580 / DSM 13 / JCM 2505 / CCUG 7422 / NBRC 12200 / NCIMB 9375 / NCTC 10341 / NRRL NRS-1264 / Gibson 46).